Reading from the N-terminus, the 161-residue chain is Ribonuclease P protein component (161 aa).

The protein belongs to the RnpA family. Consists of a catalytic RNA component (M1 or rnpB) and a protein subunit.

The enzyme catalyses Endonucleolytic cleavage of RNA, removing 5'-extranucleotides from tRNA precursor.. In terms of biological role, RNaseP catalyzes the removal of the 5'-leader sequence from pre-tRNA to produce the mature 5'-terminus. It can also cleave other RNA substrates such as 4.5S RNA. The protein component plays an auxiliary but essential role in vivo by binding to the 5'-leader sequence and broadening the substrate specificity of the ribozyme. This is Ribonuclease P protein component from Helicobacter pylori (strain J99 / ATCC 700824) (Campylobacter pylori J99).